A 2349-amino-acid chain; its full sequence is Reducing polyketide synthase hmp8 (2349 aa).

Residues 9-435 (HVPVAIIGLA…GTNGHVVLEA (427 aa)) enclose the Ketosynthase family 3 (KS3) domain. Active-site for beta-ketoacyl synthase activity residues include C182, H317, and H357. The malonyl-CoA:ACP transacylase (MAT) domain stretch occupies residues 551–856 (FVFTGQGAQW…SHNGIKNVAY (306 aa)). The tract at residues 930–1066 (RSLIGAPVPM…GLVAIDYEES (137 aa)) is N-terminal hotdog fold. The region spanning 930–1250 (RSLIGAPVPM…TSELDMDSGK (321 aa)) is the PKS/mFAS DH domain. Residues 932–1244 (LIGAPVPMMA…SVKDFRTSEL (313 aa)) form a dehydratase (DH) domain region. H962 serves as the catalytic Proton acceptor; for dehydratase activity. Residues 1094-1250 (PEHYAHDKFY…TSELDMDSGK (157 aa)) are C-terminal hotdog fold. Catalysis depends on D1160, which acts as the Proton donor; for dehydratase activity. An enoyl reductase (ER) domain region spans residues 1641-1953 (GLLDTLKFVP…QGKHRGKMVL (313 aa)). Positions 1977–2157 (ATYLFVGGLG…ISVNLGIMRD (181 aa)) are ketoreductase (KR) domain. One can recognise a Carrier domain in the interval 2267–2344 (EAAEIITDAL…SFAVKIAEKS (78 aa)). Position 2304 is an O-(pantetheine 4'-phosphoryl)serine (S2304).

The protein operates within secondary metabolite biosynthesis. Reducing polyketide synthase; part of the gene cluster that mediates the biosynthesis of hypothemycin, a resorcylic acid lactone (RAL) that irreversibly inhibits a subset of protein kinases with a conserved cysteine in the ATP binding site such as human ERK2. The first step is performed by both PKSs hmp3 and hmp8 and leads to the production of 7',8'-dehydrozearalenol (DHZ). The highly reducing PKS hpm8 synthesizes the reduced hexaketide (7S,11S,2E,8E)-7,11-dihydroxy-dodeca-2,8-dienoate, which is transferred downstream to the non-reducing PKS hpm3. Hpm3 then extends the reduced hexaketide to a nonaketide, after which regioselective cyclization and macrolactonization affords DHZ. The next step is the conversion of DHZ into aigialomycin C and is performed by the O-methyltransferase hmp5, the FAD-binding monooxygenase hmp7, and the cytochrome P450 monooxygenase hmp1. The wide substrate tolerance of the hmp5 and hmp7 implies that the reactions from DHZ to aigialomycin C can occur in any order. The steps from aigialomycin C to hypothemycin are less well established. The FAD-linked oxidoreductase hmp9 presumably catalyzes oxidation of the C-6' hydroxyl to a ketone. The timing of this oxidation is important, since the resulting enone functional group is a Michael acceptor that can react spontaneously with glutathione, an abundant metabolite in fungal cells. The glutathione S-transferase hmp2 catalyzes cis-trans isomerization of the 7',8' double bond with equilibrium favoring the trans isomer. The hpm6-encoded transporter might preferentially pump hypothemycin out of the cell relative to the trans isomer aigialomycin A. The cis-to-trans isomerization may be coupled with C-4' hydroxylation, since all known hypothemycin analogs containing the enone functional group also have hydroxyl groups at both C-4' and C-5'. In Hypomyces subiculosus (Nectria subiculosa), this protein is Reducing polyketide synthase hmp8.